A 98-amino-acid polypeptide reads, in one-letter code: Large ribosomal subunit protein bL28 (98 aa).

It belongs to the bacterial ribosomal protein bL28 family.

The protein is Large ribosomal subunit protein bL28 of Beijerinckia indica subsp. indica (strain ATCC 9039 / DSM 1715 / NCIMB 8712).